Reading from the N-terminus, the 281-residue chain is Diaminopimelate epimerase (281 aa).

Residues asparagine 13, glutamine 46, and asparagine 66 each coordinate substrate. The active-site Proton donor is cysteine 75. Residues 76–77 (GN), asparagine 160, asparagine 193, and 211–212 (ER) contribute to the substrate site. Cysteine 220 serves as the catalytic Proton acceptor. Residue 221–222 (GT) participates in substrate binding.

Belongs to the diaminopimelate epimerase family. As to quaternary structure, homodimer.

It is found in the cytoplasm. The catalysed reaction is (2S,6S)-2,6-diaminopimelate = meso-2,6-diaminopimelate. The protein operates within amino-acid biosynthesis; L-lysine biosynthesis via DAP pathway; DL-2,6-diaminopimelate from LL-2,6-diaminopimelate: step 1/1. Catalyzes the stereoinversion of LL-2,6-diaminopimelate (L,L-DAP) to meso-diaminopimelate (meso-DAP), a precursor of L-lysine and an essential component of the bacterial peptidoglycan. This Acinetobacter baumannii (strain ATCC 17978 / DSM 105126 / CIP 53.77 / LMG 1025 / NCDC KC755 / 5377) protein is Diaminopimelate epimerase.